We begin with the raw amino-acid sequence, 176 residues long: Cytochrome b (176 aa).

Helical transmembrane passes span 33-53, 77-98, and 113-133; these read FGSLLGVCLIVQILTGLFLAM, WLLRYLHANGASMFFICLYLHI, and WNVGVILLFAVMATAFMGYVL. 2 residues coordinate heme b: His-83 and His-97.

The protein belongs to the cytochrome b family. In terms of assembly, the cytochrome bc1 complex contains 11 subunits: 3 respiratory subunits (MT-CYB, CYC1 and UQCRFS1), 2 core proteins (UQCRC1 and UQCRC2) and 6 low-molecular weight proteins (UQCRH/QCR6, UQCRB/QCR7, UQCRQ/QCR8, UQCR10/QCR9, UQCR11/QCR10 and a cleavage product of UQCRFS1). This cytochrome bc1 complex then forms a dimer. The cofactor is heme b.

It localises to the mitochondrion inner membrane. Its function is as follows. Component of the ubiquinol-cytochrome c reductase complex (complex III or cytochrome b-c1 complex) that is part of the mitochondrial respiratory chain. The b-c1 complex mediates electron transfer from ubiquinol to cytochrome c. Contributes to the generation of a proton gradient across the mitochondrial membrane that is then used for ATP synthesis. This is Cytochrome b (MT-CYB) from Nyctinomops aurispinosus (Peale's free-tailed bat).